The chain runs to 239 residues: Leucine-rich repeat-containing protein 57 (239 aa).

Glycine 2 carries N-myristoyl glycine lipidation. LRR repeat units follow at residues 39-60 (NLRT…IIGK), 63-85 (LLKS…CNLK), 86-107 (KLET…FGQL), 109-130 (ALKT…LCCL), 132-153 (HLDV…VGEL), 154-175 (QAIE…ISCC), 177-197 (RLKV…PQSI), and 202-222 (QICL…RELE).

The protein resides in the membrane. The sequence is that of Leucine-rich repeat-containing protein 57 (Lrrc57) from Mus musculus (Mouse).